We begin with the raw amino-acid sequence, 215 residues long: Somatotropin (215 aa).

Positions 1–25 are cleaved as a signal peptide; sequence MAPGARISLLLLITFTLLGPQRSGA. Zn(2+) is bound at residue His44. The cysteines at positions 77 and 188 are disulfide-linked. A Phosphoserine modification is found at Ser130. Zn(2+) is bound at residue Glu197. A disulfide bridge connects residues Cys205 and Cys213.

It belongs to the somatotropin/prolactin family.

Its subcellular location is the secreted. Plays an important role in growth control. Its major role in stimulating body growth is to stimulate the liver and other tissues to secrete IGF1. It stimulates both the differentiation and proliferation of myoblasts. It also stimulates amino acid uptake and protein synthesis in muscle and other tissues. In Trichosurus vulpecula (Brush-tailed possum), this protein is Somatotropin (GH1).